The primary structure comprises 393 residues: MTTLGTALTPKATKVMMLGSGELGKEVVIELQRLGVEVIAVDRYKNAPAQQVAHRSYTISMLDGEALKALVEKERPDYIVPEVEAIATATLVELEQKGFTVVPTAKATQLTMNREGIRRLAAEELGLPTSNYQFVDNFTDFKSAVENIGIPCVVKPIMSSSGHGQSIIKSFDQIQQAWDYAQQGGRAGAGRVIVEGFVKFDYEITLLTVRHIGGTSFLAPIGHRQQNGDYRESWQPQAMSEIALQKAQQVAEKITSALGGRGIFGVEMFVCGDEVIFNEVSPRPHDTGMVTLISQELSEFALHARAILGLPIPEINLISPAASKAIVVEGKSTQVQFGNLEQVLAEPNTNIRLFGKTEVDGHRRMGVILSRDISVEKALEKAFRAYDKLEINL.

N(1)-(5-phospho-beta-D-ribosyl)glycinamide-binding positions include 22-23 (EL) and glutamate 82. Residues arginine 114, lysine 155, 160–165 (SSGHGQ), 195–198 (EGFV), and glutamate 203 contribute to the ATP site. The ATP-grasp domain maps to 119 to 308 (RLAAEELGLP…EFALHARAIL (190 aa)). Glutamate 267 and glutamate 279 together coordinate Mg(2+). Residues aspartate 286, lysine 356, and 363–364 (RR) each bind N(1)-(5-phospho-beta-D-ribosyl)glycinamide.

The protein belongs to the PurK/PurT family. In terms of assembly, homodimer.

It carries out the reaction N(1)-(5-phospho-beta-D-ribosyl)glycinamide + formate + ATP = N(2)-formyl-N(1)-(5-phospho-beta-D-ribosyl)glycinamide + ADP + phosphate + H(+). The protein operates within purine metabolism; IMP biosynthesis via de novo pathway; N(2)-formyl-N(1)-(5-phospho-D-ribosyl)glycinamide from N(1)-(5-phospho-D-ribosyl)glycinamide (formate route): step 1/1. Its function is as follows. Involved in the de novo purine biosynthesis. Catalyzes the transfer of formate to 5-phospho-ribosyl-glycinamide (GAR), producing 5-phospho-ribosyl-N-formylglycinamide (FGAR). Formate is provided by PurU via hydrolysis of 10-formyl-tetrahydrofolate. The chain is Formate-dependent phosphoribosylglycinamide formyltransferase from Mannheimia succiniciproducens (strain KCTC 0769BP / MBEL55E).